The sequence spans 360 residues: F420-dependent hydroxymycolic acid dehydrogenase (360 aa).

The segment at residues 1 to 40 (MTGISRRTFGLAAGFGAIGAGGLGGGCSTRSGPTPTPEPA) is a signal peptide (tat-type signal). Position 77 (aspartate 77) interacts with coenzyme F420-(gamma-Glu)n. The active-site Proton donor is histidine 78. 145-146 (TG) lines the coenzyme F420-(gamma-Glu)n pocket. The active-site Proton acceptor is the glutamate 147. Coenzyme F420-(gamma-Glu)n is bound by residues asparagine 150 and 213-214 (SG).

This sequence belongs to the F420-dependent hydroxymycolic acid dehydrogenase family. Homodimer. In terms of processing, is exported by the Tat system. The position of the signal peptide cleavage has not been experimentally proven. May be lipidated.

It is found in the cell envelope. It functions in the pathway lipid metabolism; mycolic acid biosynthesis. With respect to regulation, is inhibited by the anti-tuberculous drug PA-824, a bicyclic 4-nitroimidazole class compound. Therefore, this is consistent with the finding that PA-824 inhibits the formation of K-MAs and causes an accumulation of hydroxymycolic acids (H-MAs) in M.tuberculosis. Catalyzes the coenzyme F420-dependent oxidation of hydroxymycolic acids (H-MAs) to ketomycolic acids (K-MAs), a lipid class making up the mycobacterial pseudo-outer membrane and over one-third of the dry weight of M.tuberculosis. Does not exhibit F420-dependent glucose-6-phosphate dehydrogenase (FGD) activity. The chain is F420-dependent hydroxymycolic acid dehydrogenase from Mycobacterium tuberculosis (strain ATCC 25618 / H37Rv).